The chain runs to 699 residues: Protein STRUBBELIG-RECEPTOR FAMILY 5 (699 aa).

The N-terminal stretch at 1 to 22 (MTQKLVRLVIVSLAITVTLLQA) is a signal peptide. Over 23–273 (KTDNQEVSAL…DGGGITAGTG (251 aa)) the chain is Extracellular. LRR repeat units follow at residues 93 to 115 (SLTTFDLSKNNLKGNIPYQLPPN), 116 to 136 (IANLDFSENELDGNVPYSLSQ), 139 to 161 (NLQSINLGQNKLNGELPDMFQKL), 163 to 186 (KLETLDFSLNKLSGKLPQSFANLT), and 187 to 209 (SLKKLHLQDNRFTGDINVLRNLA). Asn184 carries an N-linked (GlcNAc...) asparagine glycan. The tract at residues 239–263 (NDWSTETAPPPPPGVKYGRKSSGSK) is disordered. A helical membrane pass occupies residues 274-294 (MVIAGACLGVLVLIIVLIALV). Topologically, residues 295 to 699 (SKKKSSLSPH…SYRAHDDYDY (405 aa)) are cytoplasmic. Ser368 is modified (phosphoserine). The region spanning 404 to 675 (FSPGNLLGEG…SEVVEALVRM (272 aa)) is the Protein kinase domain. Residues 410 to 418 (LGEGSIGRV) and Lys432 contribute to the ATP site.

The protein belongs to the protein kinase superfamily. Ser/Thr protein kinase family. In terms of tissue distribution, expressed in leaves and flowers.

Its subcellular location is the membrane. This chain is Protein STRUBBELIG-RECEPTOR FAMILY 5 (SRF5), found in Arabidopsis thaliana (Mouse-ear cress).